Reading from the N-terminus, the 161-residue chain is Small ribosomal subunit protein uS9 (161 aa).

Positions 1–21 (MATLQSLADLNRANTQTSNPE) are enriched in polar residues. The segment at 1–25 (MATLQSLADLNRANTQTSNPENEAP) is disordered.

This sequence belongs to the universal ribosomal protein uS9 family.

This is Small ribosomal subunit protein uS9 from Methylorubrum extorquens (strain CM4 / NCIMB 13688) (Methylobacterium extorquens).